The primary structure comprises 250 residues: FAS1 domain-containing protein AER383W (250 aa).

An N-terminal signal peptide occupies residues 1-18; sequence MRLKTILLGFCAFHVARS. In terms of domain architecture, FAS1 spans 87-247; sequence GVTLDDRLQS…GIVLVIDSSL (161 aa).

The protein resides in the vacuole. This is FAS1 domain-containing protein AER383W from Eremothecium gossypii (strain ATCC 10895 / CBS 109.51 / FGSC 9923 / NRRL Y-1056) (Yeast).